The chain runs to 215 residues: Cytochrome b6 (215 aa).

Residues 32 to 52 (IFYCLGGITFTCFLVQVATGF) traverse the membrane as a helical segment. Cys-35 is a binding site for heme c. Heme b contacts are provided by His-86 and His-100. A run of 3 helical transmembrane segments spans residues 90-110 (ASMMVLMMILHVFRVWLTGGF), 116-136 (LTWTTGVIMAVCTVSFGVTGY), and 186-206 (LHTFVLPLLTAVFMLMHFLMI). Heme b is bound by residues His-187 and His-202.

Belongs to the cytochrome b family. PetB subfamily. As to quaternary structure, the 4 large subunits of the cytochrome b6-f complex are cytochrome b6, subunit IV (17 kDa polypeptide, PetD), cytochrome f and the Rieske protein, while the 4 small subunits are PetG, PetL, PetM and PetN. The complex functions as a dimer. Heme b serves as cofactor. Heme c is required as a cofactor.

It is found in the plastid. The protein localises to the chloroplast thylakoid membrane. In terms of biological role, component of the cytochrome b6-f complex, which mediates electron transfer between photosystem II (PSII) and photosystem I (PSI), cyclic electron flow around PSI, and state transitions. The protein is Cytochrome b6 of Stigeoclonium helveticum (Green alga).